Consider the following 136-residue polypeptide: Glutaredoxin-C8 (136 aa).

Residues 33-135 (SSFVKSTVKA…KLLNIDVKED (103 aa)) enclose the Glutaredoxin domain. Cys-53 and Cys-56 are disulfide-bonded.

It belongs to the glutaredoxin family. CPYC subfamily.

The protein localises to the cytoplasm. Its function is as follows. Has a glutathione-disulfide oxidoreductase activity in the presence of NADPH and glutathione reductase. Reduces low molecular weight disulfides and proteins. The protein is Glutaredoxin-C8 (GRXC8) of Oryza sativa subsp. japonica (Rice).